We begin with the raw amino-acid sequence, 460 residues long: MLO-like protein 9 (460 aa).

Topologically, residues 1 to 21 (MAGGGGGGGGEGPRQLDQTPT) are extracellular. Residues 22-42 (WAVSTVCGVIILISIILELII) form a helical membrane-spanning segment. At 43 to 67 (HKVGEVFERKKKKALFEALEKIKNE) the chain is on the cytoplasmic side. The chain crosses the membrane as a helical span at residues 68-88 (LMVLGFISLLLTFGQNYIASI). Residues 89-158 (CVPSRYGHAM…ISLNALHQVH (70 aa)) lie on the Extracellular side of the membrane. The chain crosses the membrane as a helical span at residues 159-179 (IFIFFLAVFHVIYSAITMMLG). The Cytoplasmic segment spans residues 180-289 (RAKIRGWKVW…KVVVGIRPEL (110 aa)). Residues 290–310 (WAFVMLFLLFDVHGWYVTAVI) traverse the membrane as a helical segment. The Extracellular segment spans residues 311–315 (TMIPP). A helical transmembrane segment spans residues 316 to 336 (LLTLAIGTKLQAIISYMALEI). The Cytoplasmic portion of the chain corresponds to 337-366 (QERHAVIQGMPVVNVSDQHFWFEKPDLVLH). The chain crosses the membrane as a helical span at residues 367-387 (MIHFVLFQNAFEITYFFWIWY). The Extracellular portion of the chain corresponds to 388-398 (EFGLRSCFHHH). Residues 399 to 419 (FGLIIIRVCLGVGVQFLCSYI) traverse the membrane as a helical segment. Residues 420-460 (TLPLYALVTQMGSTMKRSVFDEQTSKALEQWHKKARKKNEK) are Cytoplasmic-facing. The tract at residues 441–460 (EQTSKALEQWHKKARKKNEK) is calmodulin-binding.

This sequence belongs to the MLO family.

Its subcellular location is the membrane. May be involved in modulation of pathogen defense and leaf cell death. Activity seems to be regulated by Ca(2+)-dependent calmodulin binding and seems not to require heterotrimeric G proteins. The polypeptide is MLO-like protein 9 (MLO9) (Arabidopsis thaliana (Mouse-ear cress)).